A 1854-amino-acid chain; its full sequence is Immunoglobulin A1 protease (1854 aa).

Residues 1 to 37 (MKKFLGEKQTRFAFRKLAVGLVSAAISSLFFVSIVGV) form the signal peptide. Positions 38-99 (DSVQAQEKLN…NAGAKTLPNT (62 aa)) are excised as a propeptide. The LPXTG sorting signal signature appears at 96–100 (LPNTG). Threonine 99 bears the Pentaglycyl murein peptidoglycan amidated threonine mark. 2 helical membrane-spanning segments follow: residues 106–125 (TMMA…FAVS) and 132–154 (KFLL…VDAL). Over 155 to 1854 (ENGSLLQYNA…FRKSIFENQK (1700 aa)) the chain is Extracellular. One can recognise a G5 domain in the interval 256–335 (KPELLYKETS…PKIVEKGTKK (80 aa)). 10 repeat units span residues 349-368 (VQPE…SGAI), 369-388 (VEPE…SGAI), 389-406 (VEPE…SGAI), 407-426 (VEPE…AGAV), 427-446 (VSPE…SGAI), 447-466 (VEPA…SGAI), 467-486 (VKPA…SGAI), 487-506 (VEPE…AGAI), 507-526 (VEPE…AGAI), and 527-546 (VEPE…EPAA). The interval 349-546 (VQPEQVAPLP…EYTGNIEPAA (198 aa)) is 10 X 20 AA approximate tandem repeats. A compositionally biased stretch (low complexity) spans 533 to 550 (EPPQEYTGNIEPAAPEAE). Positions 533-570 (EPPQEYTGNIEPAAPEAENPTEKAQEPKEQKQEPEKNI) are disordered. Over residues 552 to 570 (PTEKAQEPKEQKQEPEKNI) the composition is skewed to basic and acidic residues. Zn(2+) is bound at residue histidine 1494. Glutamate 1495 is a catalytic residue. Histidine 1498 and glutamate 1518 together coordinate Zn(2+).

Belongs to the peptidase M26 family. Zn(2+) is required as a cofactor. In terms of processing, the Gram-positive cell-wall anchor motif LPXTG is located in the N-terminal part, in contrast to such motifs in other known streptococcal and staphylococcal proteins. The protease could be cleaved by the sortase and anchored in the membrane via the two potential N-terminal transmembrane domains, whereas the propeptide located prior to the LPXTG motif would remain attached to the cell wall peptidoglycan by an amide bond.

It localises to the secreted. Its subcellular location is the cell wall. The protein localises to the membrane. The catalysed reaction is Cleavage of Pro-|-Thr bond in the hinge region of the heavy chain of human IgA.. Its activity is regulated as follows. Inhibited by EDTA. Functionally, zinc metalloproteinase which cleaves human immunoglobulin A1 (IgA1) in the hinge region. This is Immunoglobulin A1 protease (iga) from Streptococcus sanguinis.